Here is a 257-residue protein sequence, read N- to C-terminus: 5-oxoprolinase subunit A (257 aa).

The protein belongs to the LamB/PxpA family. Forms a complex composed of PxpA, PxpB and PxpC.

It catalyses the reaction 5-oxo-L-proline + ATP + 2 H2O = L-glutamate + ADP + phosphate + H(+). In terms of biological role, catalyzes the cleavage of 5-oxoproline to form L-glutamate coupled to the hydrolysis of ATP to ADP and inorganic phosphate. This is 5-oxoprolinase subunit A from Fusobacterium nucleatum subsp. nucleatum (strain ATCC 25586 / DSM 15643 / BCRC 10681 / CIP 101130 / JCM 8532 / KCTC 2640 / LMG 13131 / VPI 4355).